A 539-amino-acid chain; its full sequence is GMP synthase [glutamine-hydrolyzing] (539 aa).

One can recognise a Glutamine amidotransferase type-1 domain in the interval Thr20–Asn215. Catalysis depends on Cys96, which acts as the Nucleophile. Catalysis depends on residues His189 and Glu191. Positions Trp216–Arg413 constitute a GMPS ATP-PPase domain. Ser244 to Thr250 lines the ATP pocket. XMP is bound by residues Arg317, Asp475, Lys531, and Glu537.

In terms of assembly, homodimer. It depends on Mg(2+) as a cofactor.

The protein localises to the cytoplasm. It localises to the cytosol. The catalysed reaction is XMP + L-glutamine + ATP + H2O = GMP + L-glutamate + AMP + diphosphate + 2 H(+). It functions in the pathway purine metabolism; GMP biosynthesis; GMP from XMP (L-Gln route): step 1/1. Catalyzes the conversion of xanthine monophosphate (XMP) to GMP in the presence of glutamine and ATP through an adenyl-XMP intermediate. This chain is GMP synthase [glutamine-hydrolyzing], found in Schizosaccharomyces pombe (strain 972 / ATCC 24843) (Fission yeast).